Reading from the N-terminus, the 434-residue chain is Nicotinate phosphoribosyltransferase (434 aa).

A Phosphohistidine; by autocatalysis modification is found at histidine 242.

This sequence belongs to the NAPRTase family. Transiently phosphorylated on a His residue during the reaction cycle. Phosphorylation strongly increases the affinity for substrates and increases the rate of nicotinate D-ribonucleotide production. Dephosphorylation regenerates the low-affinity form of the enzyme, leading to product release.

The catalysed reaction is nicotinate + 5-phospho-alpha-D-ribose 1-diphosphate + ATP + H2O = nicotinate beta-D-ribonucleotide + ADP + phosphate + diphosphate. Its pathway is cofactor biosynthesis; NAD(+) biosynthesis; nicotinate D-ribonucleotide from nicotinate: step 1/1. Catalyzes the synthesis of beta-nicotinate D-ribonucleotide from nicotinate and 5-phospho-D-ribose 1-phosphate at the expense of ATP. The protein is Nicotinate phosphoribosyltransferase of Rhizobium leguminosarum bv. trifolii (strain WSM2304).